A 176-amino-acid chain; its full sequence is Endothelin-2 (176 aa).

The signal sequence occupies residues 1–22 (MVSPAWCSIALALLLALHEGKG). A propeptide spanning residues 23–44 (QAAATMEQPASAPKGRGPHLRF) is cleaved from the precursor. Intrachain disulfides connect Cys47–Cys61 and Cys49–Cys57. A propeptide spanning residues 68–176 (VNTAGQTAPY…IPAHSRRRKR (109 aa)) is cleaved from the precursor. An endothelin-like region spans residues 94–109 (CECSSAGDSACATFCH).

This sequence belongs to the endothelin/sarafotoxin family.

The protein localises to the secreted. Vasoconstrictor. This chain is Endothelin-2 (Edn2), found in Rattus norvegicus (Rat).